Consider the following 555-residue polypeptide: CTP synthase (555 aa).

The tract at residues 1–265 is amidoligase domain; sequence MTRYIFITGG…GNRVCEKLNI (265 aa). Serine 13 contacts CTP. Serine 13 serves as a coordination point for UTP. ATP is bound by residues 14-19 and aspartate 71; that span reads SLGKGI. Residues aspartate 71 and glutamate 139 each contribute to the Mg(2+) site. CTP is bound by residues 146-148, 186-191, and lysine 222; these read DIE and KTKPTQ. UTP-binding positions include 186 to 191 and lysine 222; that span reads KTKPTQ. The Glutamine amidotransferase type-1 domain maps to 290–541; sequence TVAVVGKYVD…IKAGLAAKEA (252 aa). An L-glutamine-binding site is contributed by glycine 351. The active-site Nucleophile; for glutamine hydrolysis is cysteine 378. Residues 379–382, glutamate 402, and arginine 469 contribute to the L-glutamine site; that span reads LGMQ. Active-site residues include histidine 514 and glutamate 516.

It belongs to the CTP synthase family. As to quaternary structure, homotetramer.

It catalyses the reaction UTP + L-glutamine + ATP + H2O = CTP + L-glutamate + ADP + phosphate + 2 H(+). The catalysed reaction is L-glutamine + H2O = L-glutamate + NH4(+). The enzyme catalyses UTP + NH4(+) + ATP = CTP + ADP + phosphate + 2 H(+). The protein operates within pyrimidine metabolism; CTP biosynthesis via de novo pathway; CTP from UDP: step 2/2. With respect to regulation, allosterically activated by GTP, when glutamine is the substrate; GTP has no effect on the reaction when ammonia is the substrate. The allosteric effector GTP functions by stabilizing the protein conformation that binds the tetrahedral intermediate(s) formed during glutamine hydrolysis. Inhibited by the product CTP, via allosteric rather than competitive inhibition. Functionally, catalyzes the ATP-dependent amination of UTP to CTP with either L-glutamine or ammonia as the source of nitrogen. Regulates intracellular CTP levels through interactions with the four ribonucleotide triphosphates. This chain is CTP synthase, found in Coxiella burnetii (strain RSA 331 / Henzerling II).